The following is a 206-amino-acid chain: Small ribosomal subunit protein uS4 (206 aa).

Positions 96–156 (CRLDNVVYRM…EKSLGQLRIV (61 aa)) constitute an S4 RNA-binding domain.

It belongs to the universal ribosomal protein uS4 family. Part of the 30S ribosomal subunit. Contacts protein S5. The interaction surface between S4 and S5 is involved in control of translational fidelity.

Functionally, one of the primary rRNA binding proteins, it binds directly to 16S rRNA where it nucleates assembly of the body of the 30S subunit. With S5 and S12 plays an important role in translational accuracy. The polypeptide is Small ribosomal subunit protein uS4 (Pseudomonas putida (strain ATCC 47054 / DSM 6125 / CFBP 8728 / NCIMB 11950 / KT2440)).